Here is a 379-residue protein sequence, read N- to C-terminus: uncharacterized protein (379 aa).

It belongs to the glycosyltransferase 28 family.

This is an uncharacterized protein from Methanosarcina mazei (strain ATCC BAA-159 / DSM 3647 / Goe1 / Go1 / JCM 11833 / OCM 88) (Methanosarcina frisia).